We begin with the raw amino-acid sequence, 267 residues long: Hydroxyethylthiazole kinase (267 aa).

Met46 provides a ligand contact to substrate. ATP-binding residues include Arg121 and Thr167. Ala194 is a binding site for substrate.

This sequence belongs to the Thz kinase family. The cofactor is Mg(2+).

The catalysed reaction is 5-(2-hydroxyethyl)-4-methylthiazole + ATP = 4-methyl-5-(2-phosphooxyethyl)-thiazole + ADP + H(+). It functions in the pathway cofactor biosynthesis; thiamine diphosphate biosynthesis; 4-methyl-5-(2-phosphoethyl)-thiazole from 5-(2-hydroxyethyl)-4-methylthiazole: step 1/1. Catalyzes the phosphorylation of the hydroxyl group of 4-methyl-5-beta-hydroxyethylthiazole (THZ). The polypeptide is Hydroxyethylthiazole kinase (Rhizobium leguminosarum bv. trifolii (strain WSM2304)).